The sequence spans 673 residues: Metal-nicotianamine transporter YSL1 (673 aa).

Positions 1 to 13 are enriched in basic and acidic residues; it reads MEIEQRRIMKREG. The disordered stretch occupies residues 1–39; sequence MEIEQRRIMKREGEEEEDNNQLSLQEEEPDTEEEMSGRT. The span at 14–34 shows a compositional bias: acidic residues; the sequence is EEEEDNNQLSLQEEEPDTEEE. 16 helical membrane-spanning segments follow: residues 46-66, 71-91, 119-139, 163-183, 225-245, 260-280, 283-303, 328-348, 392-412, 420-440, 442-462, 467-487, 510-530, 558-578, 604-624, and 642-662; these read QITV…SVIA, LTTG…FVFV, SAVA…LLGL, GLGW…FVLI, FMKY…FSGI, AWKQ…GMIC, LVNL…WPLL, VFLS…KILF, FAVS…PLIF, VIVA…GAGL, DINM…AVTG, VVAG…SCIL, IGTV…YKAF, FSAL…FAVL, FLVG…VFVW, and GLIC…LAGV.

The protein belongs to the YSL (TC 2.A.67.2) family. As to expression, low levels of expression in leaves and shoots, but not detected in roots. Restricted to the vasculature, in the xylem parenchyma surrounding xylem tubes. Expressed in pollen grains, in the vasculature of petals and sepals, in the carpel veins, in the style underneath the stigmatic papillae, in the vascular tissue of the funiculus and in the chalazal endosperm.

The protein resides in the membrane. In terms of biological role, involved in iron loading of the seeds. Acts probably as a transporter of iron- and metal-nicotianamine chelates. This Arabidopsis thaliana (Mouse-ear cress) protein is Metal-nicotianamine transporter YSL1 (YSL1).